A 349-amino-acid polypeptide reads, in one-letter code: Thiamine-phosphate synthase (349 aa).

The unknown stretch occupies residues 1–125; that stretch reads MGCESSLDPR…SAEAAAIRYG (125 aa). The disordered stretch occupies residues 63–85; it reads RARSTVTDPGAGMEHPAQLDRHS. Residues 126-349 form a thiamine-phosphate synthase region; the sequence is LYDLEVTCLT…LLSSLSRPTL (224 aa). 4-amino-2-methyl-5-(diphosphooxymethyl)pyrimidine-binding positions include 177 to 181 and N209; that span reads QHRCK. Positions 210 and 229 each coordinate Mg(2+). 2 residues coordinate 4-amino-2-methyl-5-(diphosphooxymethyl)pyrimidine: S248 and K277. Residue G304 coordinates 2-[(2R,5Z)-2-carboxy-4-methylthiazol-5(2H)-ylidene]ethyl phosphate.

Belongs to the thiamine-phosphate synthase family. It depends on Mg(2+) as a cofactor.

It catalyses the reaction 2-[(2R,5Z)-2-carboxy-4-methylthiazol-5(2H)-ylidene]ethyl phosphate + 4-amino-2-methyl-5-(diphosphooxymethyl)pyrimidine + 2 H(+) = thiamine phosphate + CO2 + diphosphate. The catalysed reaction is 2-(2-carboxy-4-methylthiazol-5-yl)ethyl phosphate + 4-amino-2-methyl-5-(diphosphooxymethyl)pyrimidine + 2 H(+) = thiamine phosphate + CO2 + diphosphate. The enzyme catalyses 4-methyl-5-(2-phosphooxyethyl)-thiazole + 4-amino-2-methyl-5-(diphosphooxymethyl)pyrimidine + H(+) = thiamine phosphate + diphosphate. It participates in cofactor biosynthesis; thiamine diphosphate biosynthesis; thiamine phosphate from 4-amino-2-methyl-5-diphosphomethylpyrimidine and 4-methyl-5-(2-phosphoethyl)-thiazole: step 1/1. In terms of biological role, condenses 4-methyl-5-(beta-hydroxyethyl)thiazole monophosphate (THZ-P) and 2-methyl-4-amino-5-hydroxymethyl pyrimidine pyrophosphate (HMP-PP) to form thiamine monophosphate (TMP). This chain is Thiamine-phosphate synthase, found in Parasynechococcus marenigrum (strain WH8102).